Consider the following 587-residue polypeptide: Inorganic phosphate transporter PHO84 (587 aa).

Topologically, residues 1-67 (MSSVNKDTIH…FGWQQVKTIS (67 aa)) are extracellular. Residue lysine 6 forms a Glycyl lysine isopeptide (Lys-Gly) (interchain with G-Cter in ubiquitin) linkage. Residues 68-88 (IAGVGFLTDSYDIFAINLGIT) traverse the membrane as a helical segment. At 89–108 (MMSYVYWHGSMPGPSQTLLK) the chain is on the cytoplasmic side. Residues 109-129 (VSTSVGTVIGQFGFGTLADIV) traverse the membrane as a helical segment. Over 130-133 (GRKR) the chain is Extracellular. Residues 134–154 (IYGMELIIMIVCTILQTTVAH) traverse the membrane as a helical segment. The Cytoplasmic portion of the chain corresponds to 155–156 (SP). A helical transmembrane segment spans residues 157-177 (AINFVAVLTFYRIVMGIGIGG). Residues 178–201 (DYPLSSIITSEFATTKWRGAIMGA) are Extracellular-facing. The helical transmembrane segment at 202 to 222 (VFANQAWGQISGGIIALILVA) threads the bilayer. Residues 223-250 (AYKGELEYANSGAECDARCQKACDQMWR) lie on the Cytoplasmic side of the membrane. The chain crosses the membrane as a helical span at residues 251-271 (ILIGLGTVLGLACLYFRLTIP). Residues 272–345 (ESPRYQLDVN…RHFGQWKYGK (74 aa)) are Extracellular-facing. A Glycyl lysine isopeptide (Lys-Gly) (interchain with G-Cter in ubiquitin) cross-link involves residue lysine 298. Residue threonine 302 is modified to Phosphothreonine. Serine 303 and serine 316 each carry phosphoserine. Threonine 317 carries the phosphothreonine modification. At serine 321 the chain carries Phosphoserine. Residues 346-366 (ILLGTAGSWFTLDVAFYGLSL) traverse the membrane as a helical segment. At 367–395 (NSAVILQTIGYAGSKNVYKKLYDTAVGNL) the chain is on the cytoplasmic side. The helical transmembrane segment at 396–416 (ILICAGSLPGYWVSVFTVDII) threads the bilayer. The Extracellular portion of the chain corresponds to 417–419 (GRK). A helical transmembrane segment spans residues 420-440 (PIQLAGFIILTALFCVIGFAY). Over 441–442 (HK) the chain is Cytoplasmic. The chain crosses the membrane as a helical span at residues 443-463 (LGDHGLLALYVICQFFQNFGP). The Extracellular portion of the chain corresponds to 464–485 (NTTTFIVPGECFPTRYRSTAHG). The helical transmembrane segment at 486-506 (ISAASGKVGAIIAQTALGTLI) threads the bilayer. Over 507–522 (DHNCARDGKPTNCWLP) the chain is Cytoplasmic. The chain crosses the membrane as a helical span at residues 523–543 (HVMEIFALFMLLGIFTTLLIP). The Extracellular portion of the chain corresponds to 544–587 (ETKRKTLEEINELYHDEIDPATLNFRNKNNDIESSSPSQLQHEA). The tract at residues 568–587 (FRNKNNDIESSSPSQLQHEA) is disordered. Residues serine 577, serine 579, and serine 581 each carry the phosphoserine modification.

This sequence belongs to the major facilitator superfamily. Phosphate:H(+) symporter (TC 2.A.1.9) family. As to quaternary structure, may function as a monomer. In terms of processing, phosphorylated; phosphorylation increases after phosphate addition to the growth medium. Ubiquitinated in a phosphate-dependent manner; ubiquitination may influence the trafficking of PHO84 to the cell membrane and serve as a signal for endocytosis and internalization.

The protein resides in the cell membrane. Its subcellular location is the vacuole. It catalyses the reaction phosphate(in) + H(+)(in) = phosphate(out) + H(+)(out). The enzyme catalyses Mn(2+)(in) = Mn(2+)(out). The catalysed reaction is Zn(2+)(in) = Zn(2+)(out). It carries out the reaction Cu(2+)(in) = Cu(2+)(out). It catalyses the reaction Co(2+)(in) = Co(2+)(out). Its activity is regulated as follows. Transport activity is inhibited in the presence of the protonophore carbonylcyanide m-chlorophenylhydrazone. Transport activity is inhibited by glycerol-3-phosphate. Transport activity is inhibited by phosphonoacetic acid. Signaling activity is stimulated by glycerol-3-phosphate which acts as a nontransported PHO84 agonist that can trigger PKA signaling. Signaling activity is stimulated by arsenate. Functionally, proton-coupled high-affinity transporter for external inorganic phosphate. Acts as a transceptor, a membrane protein that in addition to its transporter activity also possesses receptor-like signaling activity; mediates activation of the protein kinase A (PKA) pathway targets during growth induction, triggered by phosphate addition to cells growth-arrested due to previous phosphate starvation. Is not an essential protein, since constitutive, low affinity phosphate transporters exist in yeast. Can function as a low affinity metal transporter that transports manganese, zinc, cobalt and copper. Plays a role in manganese homeostasis predominantly under manganese surplus conditions. The polypeptide is Inorganic phosphate transporter PHO84 (PHO84) (Saccharomyces cerevisiae (strain ATCC 204508 / S288c) (Baker's yeast)).